Here is a 689-residue protein sequence, read N- to C-terminus: UvrABC system protein C (689 aa).

The span at 1-19 (MTSDSSDTAKQIGSGQPSG) shows a compositional bias: polar residues. The interval 1 to 59 (MTSDSSDTAKQIGSGQPSGSPADMRRRDGVAPEQEVDPASLETDEDDEARLPDLPDEPV) is disordered. The segment covering 42–59 (ETDEDDEARLPDLPDEPV) has biased composition (acidic residues). The region spanning 83–161 (TSPGVYRMMN…IKQLRPRFNV (79 aa)) is the GIY-YIG domain. The UVR domain maps to 271–306 (RAVKEDLARAMEQAAADLAFERAALYRDRLAALSAI).

Belongs to the UvrC family. Interacts with UvrB in an incision complex.

It localises to the cytoplasm. Its function is as follows. The UvrABC repair system catalyzes the recognition and processing of DNA lesions. UvrC both incises the 5' and 3' sides of the lesion. The N-terminal half is responsible for the 3' incision and the C-terminal half is responsible for the 5' incision. In Nitrobacter winogradskyi (strain ATCC 25391 / DSM 10237 / CIP 104748 / NCIMB 11846 / Nb-255), this protein is UvrABC system protein C.